We begin with the raw amino-acid sequence, 193 residues long: Potassium-transporting ATPase KdpC subunit (193 aa).

The chain crosses the membrane as a helical span at residues isoleucine 14–alanine 34.

It belongs to the KdpC family. In terms of assembly, the system is composed of three essential subunits: KdpA, KdpB and KdpC.

The protein localises to the cell membrane. Its function is as follows. Part of the high-affinity ATP-driven potassium transport (or Kdp) system, which catalyzes the hydrolysis of ATP coupled with the electrogenic transport of potassium into the cytoplasm. This subunit acts as a catalytic chaperone that increases the ATP-binding affinity of the ATP-hydrolyzing subunit KdpB by the formation of a transient KdpB/KdpC/ATP ternary complex. The polypeptide is Potassium-transporting ATPase KdpC subunit (Bacillus cereus (strain G9842)).